The primary structure comprises 191 residues: Protein Ves (191 aa).

It belongs to the Ves family.

This chain is Protein Ves, found in Escherichia coli (strain 55989 / EAEC).